Here is a 380-residue protein sequence, read N- to C-terminus: Cytochrome b (380 aa).

4 helical membrane-spanning segments follow: residues 33 to 53 (FGSL…FLAM), 77 to 98 (WLIR…YLHV), 113 to 133 (WNIG…GYVL), and 178 to 198 (FFAF…IHLL). Residues His83 and His97 each coordinate heme b. Heme b contacts are provided by His182 and His196. Residue His201 participates in a ubiquinone binding. Transmembrane regions (helical) follow at residues 226 to 246 (YKDM…TLFT), 288 to 308 (LGGV…PILH), 320 to 340 (ITQM…WIGG), and 347 to 367 (FMTI…ILIP).

Belongs to the cytochrome b family. In terms of assembly, the cytochrome bc1 complex contains 3 respiratory subunits (MT-CYB, CYC1 and UQCRFS1), 2 core proteins (UQCRC1 and UQCRC2) and probably 6 low-molecular weight proteins. Heme b is required as a cofactor.

The protein resides in the mitochondrion inner membrane. In terms of biological role, component of the ubiquinol-cytochrome c reductase complex (complex III or cytochrome b-c1 complex) that is part of the mitochondrial respiratory chain. The b-c1 complex mediates electron transfer from ubiquinol to cytochrome c. Contributes to the generation of a proton gradient across the mitochondrial membrane that is then used for ATP synthesis. The chain is Cytochrome b (mt-cyb) from Latimeria chalumnae (Coelacanth).